We begin with the raw amino-acid sequence, 560 residues long: E3 SUMO-protein ligase CBX4 (560 aa).

Residues 1–75 (MELPAVGEHV…LMGYRKRGPK (75 aa)) form an involved in interaction with H3C15 and H3C1 region. The interval 1 to 539 (MELPAVGEHV…LSEFKPFFGN (539 aa)) is interaction with BMI1. A Chromo domain is found at 11-69 (FAVESIEKKRIRKGRVEYLVKWRGWSPKYNTWEPEENILDPRLLIAFQNRERQEQLMGY). Glycyl lysine isopeptide (Lys-Gly) (interchain with G-Cter in SUMO2) cross-links involve residues K77, K106, K114, and K125. Residues 92–152 (VLTGLQDSST…PPGKSGKYYY (61 aa)) form a disordered region. An N6-acetyllysine; alternate modification is found at K149. Residue K149 forms a Glycyl lysine isopeptide (Lys-Gly) (interchain with G-Cter in SUMO2); alternate linkage. Glycyl lysine isopeptide (Lys-Gly) (interchain with G-Cter in SUMO2) cross-links involve residues K157, K167, and K178. Phosphoserine is present on S182. Glycyl lysine isopeptide (Lys-Gly) (interchain with G-Cter in SUMO2) cross-links involve residues K191, K205, K212, K223, K249, K268, K278, and K280. The segment at 217–243 (AAGAPGKGSEKGPPNGMMPAPKEAVTG) is disordered. Basic and acidic residues-rich tracts occupy residues 281-291 (SGEVAEGEARS) and 298-331 (AADE…REEE). Positions 281 to 404 (SGEVAEGEAR…HHHHHHAVGL (124 aa)) are disordered. Glycyl lysine isopeptide (Lys-Gly) (interchain with G-Cter in SUMO2) cross-links involve residues K320, K352, and K365. The segment covering 380–401 (PSHHPHPHPHHHHHHHHHHHHA) has biased composition (basic residues). S467 is modified (phosphoserine). K494 participates in a covalent cross-link: Glycyl lysine isopeptide (Lys-Gly) (interchain with G-Cter in SUMO2); alternate. K494 participates in a covalent cross-link: Glycyl lysine isopeptide (Lys-Gly) (interchain with G-Cter in SUMO); alternate. T497 carries the phosphothreonine; by HIPK2 modification. Over residues 509-521 (AAPTTTAEKPPAE) the composition is skewed to low complexity. The segment at 509–528 (AAPTTTAEKPPAEAQDEPAE) is disordered. The involved in interaction with H3C15 and RNF2 stretch occupies residues 531–556 (SEFKPFFGNIIITDVTANCLTVTFKE). Residues 540–560 (IIITDVTANCLTVTFKEYVTV) form an interaction with RNF2 region.

As to quaternary structure, interacts with histone H3-K9Me3. Interacts with CHTOP. Component of a PRC1-like complex. The composition of the PRC1 complex differs between the PRC1 complex in pluripotent embryonic stem cells containing RNF2, CBX7 and PCGF2, and the PRC1 complex in differentiating cells containing RNF2, CBX2, CBX4 and BMI1. Self-associates. Interacts with SUV39H1 and HIPK2. Interacts with CSNK2B. May interact with H3C15, H3C1 and RNF2. Interacts with SUMO1P1/SUMO5. Interacts with PRDM1/Blimp-1. In terms of processing, ubiquitinated. Ubiquitination regulates the function of the Polycomb group (PcG) multiprotein PRC1-like complex. Deubiquitinated by USP26. Phosphorylated on Thr-497 by HIPK2 upon DNA damage. This phosphorylation stimulates E3 SUMO-protein ligase activity and promotes sumoylation on Lys-494, as well as sumoylation of other target proteins, such as HNRNPK. In terms of tissue distribution, ubiquitous.

It is found in the nucleus. Its subcellular location is the nucleus speckle. Its pathway is protein modification; protein sumoylation. Its function is as follows. E3 SUMO-protein ligase that catalyzes sumoylation of target proteins by promoting the transfer of SUMO from the E2 enzyme to the substrate. Involved in the sumoylation of HNRNPK, a p53/TP53 transcriptional coactivator, hence indirectly regulates p53/TP53 transcriptional activation resulting in p21/CDKN1A expression. Monosumoylates ZNF131. Component of a Polycomb group (PcG) multiprotein PRC1-like complex, a complex class required to maintain the transcriptionally repressive state of many genes, including Hox genes, throughout development. PcG PRC1 complex acts via chromatin remodeling and modification of histones; it mediates monoubiquitination of histone H2A 'Lys-119', rendering chromatin heritably changed in its expressibility. Binds to histone H3 trimethylated at 'Lys-9' (H3K9me3). Plays a role in the lineage differentiation of the germ layers in embryonic development. The sequence is that of E3 SUMO-protein ligase CBX4 (CBX4) from Homo sapiens (Human).